We begin with the raw amino-acid sequence, 191 residues long: Calcium-activated potassium channel subunit beta-1 (191 aa).

At 2–18 the chain is on the cytoplasmic side; it reads GKKLVMAQRRGETRALC. Residues 19–39 traverse the membrane as a helical segment; sequence LGVAMVVGAVITYYILGTTVL. Residues 40 to 157 are Extracellular-facing; sequence PLYQKSVWTQ…YRRLYGPQSL (118 aa). Asn80 and Asn142 each carry an N-linked (GlcNAc...) asparagine glycan. Residues 158 to 178 traverse the membrane as a helical segment; the sequence is LFSLFWPTFLLTGGLLIIVMV. Residues 179–191 lie on the Cytoplasmic side of the membrane; the sequence is KINQSLSILAAQR.

The protein belongs to the KCNMB (TC 8.A.14.1) family. KCNMB1 subfamily. As to quaternary structure, interacts with KCNMA1 tetramer. There are probably 4 molecules of KCMNB1 per KCNMA1 tetramer. N-glycosylated.

The protein localises to the membrane. In terms of biological role, regulatory subunit of the calcium activated potassium KCNMA1 (maxiK) channel. Modulates the calcium sensitivity and gating kinetics of KCNMA1, thereby contributing to KCNMA1 channel diversity. Increases the apparent Ca(2+)/voltage sensitivity of the KCNMA1 channel. It also modifies KCNMA1 channel kinetics and alters its pharmacological properties. It slows down the activation and the deactivation kinetics of the channel. Acts as a negative regulator of smooth muscle contraction by enhancing the calcium sensitivity to KCNMA1. Its presence is also a requirement for internal binding of the KCNMA1 channel opener dehydrosoyasaponin I (DHS-1) triterpene glycoside and for external binding of the agonist hormone 17-beta-estradiol (E2). Increases the binding activity of charybdotoxin (CTX) toxin to KCNMA1 peptide blocker by increasing the CTX association rate and decreasing the dissociation rate. In Bos taurus (Bovine), this protein is Calcium-activated potassium channel subunit beta-1 (KCNMB1).